The sequence spans 911 residues: Eukaryotic translation initiation factor 3 subunit C (911 aa).

Disordered regions lie at residues 1–38 and 155–181; these read MSRFFANGSDSESESSEEEVQAPNFNKASAFQFSDDEE and SRFREAPDQESEAEDEEAHVSDAGEAA. A compositionally biased stretch (acidic residues) spans 11 to 20; the sequence is SESESSEEEV. Over residues 23–32 the composition is skewed to polar residues; that stretch reads PNFNKASAFQ. Ser34, Ser165, Ser175, and Ser184 each carry phosphoserine. Residues 162-171 show a composition bias toward acidic residues; that stretch reads DQESEAEDEE. The span at 196 to 208 shows a compositional bias: low complexity; the sequence is APKIAKSAPAKSV. The segment at 196 to 284 is disordered; it reads APKIAKSAPA…KRAEDDEDGE (89 aa). The span at 210 to 236 shows a compositional bias: acidic residues; sequence ADDEDSDDSIDWDSDSESETESSEDEN. Over residues 241–271 the composition is skewed to basic and acidic residues; it reads MRERFLKRSTEKGEDKGDDDKRKDKRKEQKL. The region spanning 642–818 is the PCI domain; sequence FHMHINLELL…ETVVMHRSEP (177 aa). The disordered stretch occupies residues 851–911; that stretch reads FQRGNMGNRG…QQQVQTIDEE (61 aa). The segment covering 885-896 has biased composition (basic residues); it reads QRNRNQRGHHKN. The span at 897 to 911 shows a compositional bias: low complexity; the sequence is QQQQQQQQVQTIDEE.

The protein belongs to the eIF-3 subunit C family. As to quaternary structure, component of the eukaryotic translation initiation factor 3 (eIF-3) complex. The eIF-3 complex interacts with pix.

Its subcellular location is the cytoplasm. Component of the eukaryotic translation initiation factor 3 (eIF-3) complex, which is involved in protein synthesis of a specialized repertoire of mRNAs and, together with other initiation factors, stimulates binding of mRNA and methionyl-tRNAi to the 40S ribosome. The eIF-3 complex specifically targets and initiates translation of a subset of mRNAs involved in cell proliferation. This Drosophila pseudoobscura pseudoobscura (Fruit fly) protein is Eukaryotic translation initiation factor 3 subunit C.